A 114-amino-acid polypeptide reads, in one-letter code: Ribonuclease P protein component (114 aa).

Belongs to the RnpA family. Consists of a catalytic RNA component (M1 or rnpB) and a protein subunit.

It catalyses the reaction Endonucleolytic cleavage of RNA, removing 5'-extranucleotides from tRNA precursor.. In terms of biological role, RNaseP catalyzes the removal of the 5'-leader sequence from pre-tRNA to produce the mature 5'-terminus. It can also cleave other RNA substrates such as 4.5S RNA. The protein component plays an auxiliary but essential role in vivo by binding to the 5'-leader sequence and broadening the substrate specificity of the ribozyme. The polypeptide is Ribonuclease P protein component (Buchnera aphidicola subsp. Baizongia pistaciae (strain Bp)).